The following is a 387-amino-acid chain: Probable WRKY transcription factor 36 (387 aa).

Residues 197-264 (CEDPSINDGC…YEGNHDHPLP (68 aa)) constitute a DNA-binding region (WRKY). The segment at 322-366 (RPNYPNQLPDDYPLSSSSFSLNFSSPDPPPPSSHDHTLNFSGLRT) is disordered. Positions 329 to 346 (LPDDYPLSSSSFSLNFSS) are enriched in low complexity.

The protein resides in the nucleus. In terms of biological role, transcription factor. Interacts specifically with the W box (5'-(T)TGAC[CT]-3'), a frequently occurring elicitor-responsive cis-acting element. This is Probable WRKY transcription factor 36 (WRKY36) from Arabidopsis thaliana (Mouse-ear cress).